Here is a 362-residue protein sequence, read N- to C-terminus: Formate dehydrogenase (362 aa).

Substrate is bound by residues valine 93 and asparagine 119. NAD(+) is bound by residues 174 to 175 (RI), aspartate 195, 230 to 234 (PLHAG), threonine 256, aspartate 282, 311 to 314 (HYSG), and serine 357.

This sequence belongs to the D-isomer specific 2-hydroxyacid dehydrogenase family. FDH subfamily. Homodimer.

Its subcellular location is the cytoplasm. The catalysed reaction is formate + NAD(+) = CO2 + NADH. Its function is as follows. Catalyzes the NAD(+)-dependent oxidation of formate to carbon dioxide. Formate oxidation is the final step in the methanol oxidation pathway in methylotrophic microorganisms. Has a role in the detoxification of exogenous formate in non-methylotrophic organisms. The polypeptide is Formate dehydrogenase (Pichia angusta (Yeast)).